A 127-amino-acid chain; its full sequence is Aspartate 1-decarboxylase (127 aa).

The active-site Schiff-base intermediate with substrate; via pyruvic acid is the serine 25. At serine 25 the chain carries Pyruvic acid (Ser). Substrate is bound at residue threonine 57. Residue tyrosine 58 is the Proton donor of the active site. Residue 73–75 (GAA) participates in substrate binding.

It belongs to the PanD family. In terms of assembly, heterooctamer of four alpha and four beta subunits. Requires pyruvate as cofactor. Is synthesized initially as an inactive proenzyme, which is activated by self-cleavage at a specific serine bond to produce a beta-subunit with a hydroxyl group at its C-terminus and an alpha-subunit with a pyruvoyl group at its N-terminus.

The protein localises to the cytoplasm. It carries out the reaction L-aspartate + H(+) = beta-alanine + CO2. It participates in cofactor biosynthesis; (R)-pantothenate biosynthesis; beta-alanine from L-aspartate: step 1/1. Functionally, catalyzes the pyruvoyl-dependent decarboxylation of aspartate to produce beta-alanine. The polypeptide is Aspartate 1-decarboxylase (Neisseria meningitidis serogroup B (strain ATCC BAA-335 / MC58)).